The primary structure comprises 467 residues: Constitutive acid phosphatase (467 aa).

An N-terminal signal peptide occupies residues 1–17 (MFKSVVYSVLAAALVNA). His75 (nucleophile) is an active-site residue. N-linked (GlcNAc...) asparagine glycosylation is found at Asn97, Asn103, Asn162, Asn192, Asn250, and Asn315. The Proton donor role is filled by Asp338. Residues Asn356, Asn390, Asn439, Asn445, Asn456, and Asn461 are each glycosylated (N-linked (GlcNAc...) asparagine).

The protein belongs to the histidine acid phosphatase family.

The enzyme catalyses a phosphate monoester + H2O = an alcohol + phosphate. The sequence is that of Constitutive acid phosphatase (PHO3) from Saccharomyces cerevisiae (strain ATCC 204508 / S288c) (Baker's yeast).